The sequence spans 354 residues: Methylthioribose-1-phosphate isomerase (354 aa).

Substrate is bound by residues 49–51, arginine 92, and glutamine 199; that span reads RGA. Catalysis depends on aspartate 240, which acts as the Proton donor. 250–251 provides a ligand contact to substrate; that stretch reads NK.

The protein belongs to the eIF-2B alpha/beta/delta subunits family. MtnA subfamily.

It carries out the reaction 5-(methylsulfanyl)-alpha-D-ribose 1-phosphate = 5-(methylsulfanyl)-D-ribulose 1-phosphate. It participates in amino-acid biosynthesis; L-methionine biosynthesis via salvage pathway; L-methionine from S-methyl-5-thio-alpha-D-ribose 1-phosphate: step 1/6. Functionally, catalyzes the interconversion of methylthioribose-1-phosphate (MTR-1-P) into methylthioribulose-1-phosphate (MTRu-1-P). This chain is Methylthioribose-1-phosphate isomerase, found in Koribacter versatilis (strain Ellin345).